We begin with the raw amino-acid sequence, 148 residues long: Large ribosomal subunit protein bL9 (148 aa).

It belongs to the bacterial ribosomal protein bL9 family.

Functionally, binds to the 23S rRNA. The polypeptide is Large ribosomal subunit protein bL9 (Campylobacter concisus (strain 13826)).